Consider the following 653-residue polypeptide: Acetyl-coenzyme A synthetase 1 (653 aa).

Residues 191 to 194, T311, and N335 each bind CoA; that span reads RGGR. ATP-binding positions include 387–389, 411–416, D500, and R515; these read GEP and DTWWQT. S523 contacts CoA. R526 contributes to the ATP binding site. 3 residues coordinate Mg(2+): V537, H539, and V542. R584 serves as a coordination point for CoA. At K609 the chain carries N6-acetyllysine.

The protein belongs to the ATP-dependent AMP-binding enzyme family. Mg(2+) serves as cofactor. In terms of processing, acetylated. Deacetylation by the SIR2-homolog deacetylase activates the enzyme.

It catalyses the reaction acetate + ATP + CoA = acetyl-CoA + AMP + diphosphate. Catalyzes the conversion of acetate into acetyl-CoA (AcCoA), an essential intermediate at the junction of anabolic and catabolic pathways. AcsA undergoes a two-step reaction. In the first half reaction, AcsA combines acetate with ATP to form acetyl-adenylate (AcAMP) intermediate. In the second half reaction, it can then transfer the acetyl group from AcAMP to the sulfhydryl group of CoA, forming the product AcCoA. The chain is Acetyl-coenzyme A synthetase 1 from Pseudomonas putida (strain ATCC 47054 / DSM 6125 / CFBP 8728 / NCIMB 11950 / KT2440).